We begin with the raw amino-acid sequence, 125 residues long: Inner membrane protein YbjM (125 aa).

Residues 1-6 (MKHKQR) lie on the Cytoplasmic side of the membrane. The chain crosses the membrane as a helical span at residues 7-27 (WAGAICCFVLFIVVCLFLATH). Residues 28–34 (MKGAFRA) are Periplasmic-facing. A helical transmembrane segment spans residues 35-55 (AGHPEIGLLFFILPGAVASFF). At 56–64 (SQRREVLKP) the chain is on the cytoplasmic side. The chain crosses the membrane as a helical span at residues 65–85 (LFGAMLAAPCSMLIMRLFFSP). Residues 86 to 92 (TRSFWQE) lie on the Periplasmic side of the membrane. A helical transmembrane segment spans residues 93 to 113 (LAWLLSAVFWCALGALCFLFI). At 114–125 (SSLFKPQHRKNQ) the chain is on the cytoplasmic side.

The protein resides in the cell inner membrane. The chain is Inner membrane protein YbjM (ybjM) from Escherichia coli O157:H7.